A 254-amino-acid chain; its full sequence is Zinc import ATP-binding protein ZnuC (254 aa).

The ABC transporter domain maps to 5-221 (ICAADLSVSH…PAYRALFGSE (217 aa)). 38-45 (GPNGSGKS) is an ATP binding site. A compositionally biased stretch (basic and acidic residues) spans 234 to 245 (DHDHDHVAEGHR). Residues 234-254 (DHDHDHVAEGHRHGPACAHPH) form a disordered region.

It belongs to the ABC transporter superfamily. Zinc importer (TC 3.A.1.15.5) family. The complex is composed of two ATP-binding proteins (ZnuC), two transmembrane proteins (ZnuB) and a solute-binding protein (ZnuA).

The protein localises to the cell inner membrane. The enzyme catalyses Zn(2+)(out) + ATP(in) + H2O(in) = Zn(2+)(in) + ADP(in) + phosphate(in) + H(+)(in). Functionally, part of the ABC transporter complex ZnuABC involved in zinc import. Responsible for energy coupling to the transport system. The protein is Zinc import ATP-binding protein ZnuC of Paracoccus denitrificans (strain Pd 1222).